Here is a 449-residue protein sequence, read N- to C-terminus: 3-phosphoshikimate 1-carboxyvinyltransferase (449 aa).

Residues K28, S29, and R33 each coordinate 3-phosphoshikimate. Residue K28 participates in phosphoenolpyruvate binding. Phosphoenolpyruvate-binding residues include G105 and R133. S179, Q181, D332, and K359 together coordinate 3-phosphoshikimate. A phosphoenolpyruvate-binding site is contributed by Q181. The Proton acceptor role is filled by D332. 2 residues coordinate phosphoenolpyruvate: R363 and R406.

It belongs to the EPSP synthase family. Monomer.

It is found in the cytoplasm. The enzyme catalyses 3-phosphoshikimate + phosphoenolpyruvate = 5-O-(1-carboxyvinyl)-3-phosphoshikimate + phosphate. It participates in metabolic intermediate biosynthesis; chorismate biosynthesis; chorismate from D-erythrose 4-phosphate and phosphoenolpyruvate: step 6/7. Its function is as follows. Catalyzes the transfer of the enolpyruvyl moiety of phosphoenolpyruvate (PEP) to the 5-hydroxyl of shikimate-3-phosphate (S3P) to produce enolpyruvyl shikimate-3-phosphate and inorganic phosphate. The protein is 3-phosphoshikimate 1-carboxyvinyltransferase of Nitrobacter winogradskyi (strain ATCC 25391 / DSM 10237 / CIP 104748 / NCIMB 11846 / Nb-255).